The chain runs to 285 residues: tRNA uridine(34) hydroxylase (285 aa).

The 96-residue stretch at 130 to 225 folds into the Rhodanese domain; sequence RGDDVVFFDG…YGEAFGDTGL (96 aa). Cys185 acts as the Cysteine persulfide intermediate in catalysis.

The protein belongs to the TrhO family.

The catalysed reaction is uridine(34) in tRNA + AH2 + O2 = 5-hydroxyuridine(34) in tRNA + A + H2O. Catalyzes oxygen-dependent 5-hydroxyuridine (ho5U) modification at position 34 in tRNAs. The chain is tRNA uridine(34) hydroxylase from Rhodococcus jostii (strain RHA1).